Here is a 418-residue protein sequence, read N- to C-terminus: BTB and MATH domain-containing protein 41 (418 aa).

The disordered stretch occupies residues 1–33 (MEINNGAQPENAAVSIPSRSPSGKSEKRKSPSI). In terms of domain architecture, MATH spans 45–173 (SFTNYWSVER…NDILTIGCEL (129 aa)). One can recognise a BTB domain in the interval 232–293 (SDFIIVASCG…TLDVLLRHMY (62 aa)).

As to quaternary structure, interacts with cul-3.

It participates in protein modification; protein ubiquitination. Probable substrate-specific adapter of an E3 ubiquitin-protein ligase complex which mediates the ubiquitination and subsequent proteasomal degradation of target proteins. In Caenorhabditis elegans, this protein is BTB and MATH domain-containing protein 41 (bath-41).